We begin with the raw amino-acid sequence, 373 residues long: MKPINTFFSSFLLALTLGLPATSQAEVEIPIMDLVDVRGIRENQLVGYGLVVGLAGQGDRNQVKFTSQSITNMLRQFGVQIDDSMDPKLRNVASVSVTASVDPMAGPGQTLDVVVSSIGDAKSLRGGTLLLTPLRGIDGEVYAIAQGSVVVGGLSAEGKSGSKVEVNTPTAGRVPNGATLEREIKTDFNQRDEITLNLRKPSFTTAKNIAREINNTFGPNVAVAINKARVDMRAPKDTQQRVIMMSMLEEMSVVEGRKPARIVFNSRTGTVVIGKNVKVGEAAVSHGNLTVRISESEKVSQPNAFADGETKVVNQTDIDVNEELAQMVIWPPGTELNTIVDAVNSLGATPTDLMSILQALNEAGALNAELVVI.

A signal peptide spans 1–25 (MKPINTFFSSFLLALTLGLPATSQA).

The protein belongs to the FlgI family. The basal body constitutes a major portion of the flagellar organelle and consists of four rings (L,P,S, and M) mounted on a central rod.

It is found in the periplasm. It localises to the bacterial flagellum basal body. Its function is as follows. Assembles around the rod to form the L-ring and probably protects the motor/basal body from shearing forces during rotation. The protein is Flagellar P-ring protein 1 of Vibrio parahaemolyticus serotype O3:K6 (strain RIMD 2210633).